The following is a 204-amino-acid chain: dTTP/UTP pyrophosphatase (204 aa).

Aspartate 76 (proton acceptor) is an active-site residue.

This sequence belongs to the Maf family. YhdE subfamily. The cofactor is a divalent metal cation.

The protein localises to the cytoplasm. The enzyme catalyses dTTP + H2O = dTMP + diphosphate + H(+). It carries out the reaction UTP + H2O = UMP + diphosphate + H(+). Its function is as follows. Nucleoside triphosphate pyrophosphatase that hydrolyzes dTTP and UTP. May have a dual role in cell division arrest and in preventing the incorporation of modified nucleotides into cellular nucleic acids. The sequence is that of dTTP/UTP pyrophosphatase from Salinibacter ruber (strain DSM 13855 / M31).